Here is a 111-residue protein sequence, read N- to C-terminus: Small ribosomal subunit protein uS15c (111 aa).

Belongs to the universal ribosomal protein uS15 family. As to quaternary structure, part of the 30S ribosomal subunit.

It localises to the plastid. The protein localises to the chloroplast. The protein is Small ribosomal subunit protein uS15c (rps15) of Staurastrum punctulatum (Green alga).